A 233-amino-acid chain; its full sequence is Large ribosomal subunit protein eL6z (233 aa).

A disordered region spans residues 175 to 195 (EFFEAEKEEKKEIPQEKKEDQ).

Belongs to the eukaryotic ribosomal protein eL6 family.

In Arabidopsis thaliana (Mouse-ear cress), this protein is Large ribosomal subunit protein eL6z (RPL6A).